The sequence spans 172 residues: SsrA-binding protein (172 aa).

The protein belongs to the SmpB family.

It is found in the cytoplasm. In terms of biological role, required for rescue of stalled ribosomes mediated by trans-translation. Binds to transfer-messenger RNA (tmRNA), required for stable association of tmRNA with ribosomes. tmRNA and SmpB together mimic tRNA shape, replacing the anticodon stem-loop with SmpB. tmRNA is encoded by the ssrA gene; the 2 termini fold to resemble tRNA(Ala) and it encodes a 'tag peptide', a short internal open reading frame. During trans-translation Ala-aminoacylated tmRNA acts like a tRNA, entering the A-site of stalled ribosomes, displacing the stalled mRNA. The ribosome then switches to translate the ORF on the tmRNA; the nascent peptide is terminated with the 'tag peptide' encoded by the tmRNA and targeted for degradation. The ribosome is freed to recommence translation, which seems to be the essential function of trans-translation. The protein is SsrA-binding protein of Dehalococcoides mccartyi (strain ATCC BAA-2100 / JCM 16839 / KCTC 5957 / BAV1).